The following is a 236-amino-acid chain: 2,3,4,5-tetrahydropyridine-2,6-dicarboxylate N-acetyltransferase (236 aa).

Belongs to the transferase hexapeptide repeat family. DapH subfamily.

The catalysed reaction is (S)-2,3,4,5-tetrahydrodipicolinate + acetyl-CoA + H2O = L-2-acetamido-6-oxoheptanedioate + CoA. The protein operates within amino-acid biosynthesis; L-lysine biosynthesis via DAP pathway; LL-2,6-diaminopimelate from (S)-tetrahydrodipicolinate (acetylase route): step 1/3. In terms of biological role, catalyzes the transfer of an acetyl group from acetyl-CoA to tetrahydrodipicolinate. The polypeptide is 2,3,4,5-tetrahydropyridine-2,6-dicarboxylate N-acetyltransferase (Listeria innocua serovar 6a (strain ATCC BAA-680 / CLIP 11262)).